Consider the following 59-residue polypeptide: MAKTIKITQTRSAIGRLPKHKATLLGLGLRRIGHTVEREDTPAVRGMVNAVSYMVKVEE.

It belongs to the universal ribosomal protein uL30 family. As to quaternary structure, part of the 50S ribosomal subunit.

The chain is Large ribosomal subunit protein uL30 from Pectobacterium atrosepticum (strain SCRI 1043 / ATCC BAA-672) (Erwinia carotovora subsp. atroseptica).